The sequence spans 391 residues: MAKSLPLNSRSKTTALKQPRELFSYARDIDGKYVYDDPENSLSYYYLPDSTIDTGIDLQGGYSKFKKIPDEQNLADFNSLLKAIIKYETSEGKKISSDIITFREIMTKILSLPYNLTDPIDLYVVPFDGQLFIKSDDELDMKRRKEQEVRMKQTNTVERYDYMKRCEYVGYKFETIATIPKPWSQVSRSQIENRNKKVVNNYEQYLSVIRTGIGNVKLVLAGEIDCCWDYLPDEQNKKLNHYVELKTSRIIENNSQVVSFEQKLFKAWCQCFLMGVTKIIYGFRDNNLILKNVELFNTEEIPILIKNNPLTNAATEKKINCTNALKWYGAVVDWLNTTVDKKDETKSYRLKYDPVRKSFTLSETESETNEKLRNGELLTPEFTEWRQSLKK.

Residue glutamate 174 participates in a divalent metal cation binding. A substrate-binding site is contributed by glutamate 223. 3 residues coordinate a divalent metal cation: aspartate 225, glutamate 244, and leucine 245. 2 residues coordinate substrate: lysine 246 and glutamine 270.

It belongs to the DXO/Dom3Z family. As to quaternary structure, interacts with RAT1; the interaction is direct, stabilizes RAT1 protein structure and stimulates its exoribonuclease activity. The interaction also stimulates RAI1 pyrophosphohydrolase activity, probably by recruiting it to mRNA substrates. It depends on a divalent metal cation as a cofactor.

Its subcellular location is the nucleus. It catalyses the reaction a 5'-end NAD(+)-phospho-ribonucleoside in mRNA + H2O = a 5'-end phospho-ribonucleoside in mRNA + NAD(+) + H(+). The catalysed reaction is a 5'-end (N(7)-methyl 5'-triphosphoguanosine)-ribonucleoside-ribonucleotide in mRNA + H2O = a (N(7)-methyl 5'-triphosphoguanosine)-nucleoside + a 5'-end phospho-ribonucleoside in mRNA + H(+). The enzyme catalyses a 5'-end triphospho-ribonucleoside in mRNA + H2O = a 5'-end phospho-ribonucleoside in mRNA + diphosphate + H(+). In terms of biological role, decapping enzyme for NAD-capped RNAs: specifically hydrolyzes the nicotinamide adenine dinucleotide (NAD) cap from a subset of RNAs by removing the entire NAD moiety from the 5'-end of an NAD-capped RNA. The NAD-cap is present at the 5'-end of some RNAs and snoRNAs. In contrast to the canonical 5'-end N7 methylguanosine (m7G) cap, the NAD cap promotes mRNA decay. Also acts as a non-canonical decapping enzyme that removes the entire cap structure of m7G capped or incompletely capped RNAs. Has decapping activity toward incomplete 5'-end m7G cap mRNAs such as unmethylated 5'-end-capped RNA (cap0), while it has no activity toward 2'-O-ribose methylated m7G cap (cap1). Also possesses RNA 5'-pyrophosphohydrolase activity by hydrolyzing the 5'-end triphosphate to release pyrophosphates. Stimulates exoribonuclease activity of Rat1, allowing it to degrade RNAs with stable secondary structure more effectively. The chain is Decapping nuclease RAI1 from Candida albicans (strain SC5314 / ATCC MYA-2876) (Yeast).